Consider the following 205-residue polypeptide: MSGAAAAAARALPKAVTFVTGNAKKLEEVRAILGSSIPFQSLKLDLPELQGEPEDISKEKARMAASQVNGPVLVEDTCLCFNALKGLPGPYIKWFLEKTGHEGLNNLLLAYEDKSAFAMCIFSLALGPGEEPMTFVGKTAGKIVPARGPADFGWDPVFQPDGFDQTYAEMPKSVKNQISHRGKALALVKEHFAAANYKVQNDGSA.

An ITP-binding site is contributed by 20-25; it reads TGNAKK. Glu48 contacts Mg(2+). Residues Lys60, 76-77, Lys93, 152-155, Lys175, and 180-181 contribute to the ITP site; these read DT, FGWD, and HR.

The protein belongs to the HAM1 NTPase family. As to quaternary structure, homodimer. It depends on Mg(2+) as a cofactor. Mn(2+) serves as cofactor.

The protein resides in the cytoplasm. It catalyses the reaction ITP + H2O = IMP + diphosphate + H(+). The enzyme catalyses dITP + H2O = dIMP + diphosphate + H(+). The catalysed reaction is XTP + H2O = XMP + diphosphate + H(+). Its function is as follows. Pyrophosphatase that hydrolyzes non-canonical purine nucleotides such as inosine triphosphate (ITP), deoxyinosine triphosphate (dITP) or xanthosine 5'-triphosphate (XTP) to their respective monophosphate derivatives. The enzyme does not distinguish between the deoxy- and ribose forms. Probably excludes non-canonical purines from RNA and DNA precursor pools, thus preventing their incorporation into RNA and DNA and avoiding chromosomal lesions. The sequence is that of Inosine triphosphate pyrophosphatase from Oryza sativa subsp. japonica (Rice).